We begin with the raw amino-acid sequence, 635 residues long: 1-deoxy-D-xylulose-5-phosphate synthase (635 aa).

Thiamine diphosphate is bound by residues His-74 and 115–117 (GHA). Asp-146 is a Mg(2+) binding site. Thiamine diphosphate-binding positions include 147 to 148 (GA), Asn-175, Tyr-285, and Glu-367. Position 175 (Asn-175) interacts with Mg(2+).

The protein belongs to the transketolase family. DXPS subfamily. As to quaternary structure, homodimer. Mg(2+) serves as cofactor. Requires thiamine diphosphate as cofactor.

It carries out the reaction D-glyceraldehyde 3-phosphate + pyruvate + H(+) = 1-deoxy-D-xylulose 5-phosphate + CO2. The protein operates within metabolic intermediate biosynthesis; 1-deoxy-D-xylulose 5-phosphate biosynthesis; 1-deoxy-D-xylulose 5-phosphate from D-glyceraldehyde 3-phosphate and pyruvate: step 1/1. Functionally, catalyzes the acyloin condensation reaction between C atoms 2 and 3 of pyruvate and glyceraldehyde 3-phosphate to yield 1-deoxy-D-xylulose-5-phosphate (DXP). The sequence is that of 1-deoxy-D-xylulose-5-phosphate synthase from Anaeromyxobacter sp. (strain Fw109-5).